Reading from the N-terminus, the 220-residue chain is Protein-methionine-sulfoxide reductase heme-binding subunit MsrQ (220 aa).

5 helical membrane-spanning segments follow: residues 20–40 (IWLL…LGAS), 52–72 (EHTL…VTPI), 86–106 (ALGL…MVLD), 122–142 (PFIT…LTSN), and 159–179 (LVYV…KSWP).

It belongs to the MsrQ family. As to quaternary structure, heterodimer of a catalytic subunit (MsrP) and a heme-binding subunit (MsrQ). The cofactor is FMN. Heme b serves as cofactor.

The protein localises to the cell inner membrane. In terms of biological role, part of the MsrPQ system that repairs oxidized periplasmic proteins containing methionine sulfoxide residues (Met-O), using respiratory chain electrons. Thus protects these proteins from oxidative-stress damage caused by reactive species of oxygen and chlorine generated by the host defense mechanisms. MsrPQ is essential for the maintenance of envelope integrity under bleach stress, rescuing a wide series of structurally unrelated periplasmic proteins from methionine oxidation. MsrQ provides electrons for reduction to the reductase catalytic subunit MsrP, using the quinone pool of the respiratory chain. This chain is Protein-methionine-sulfoxide reductase heme-binding subunit MsrQ, found in Brucella anthropi (strain ATCC 49188 / DSM 6882 / CCUG 24695 / JCM 21032 / LMG 3331 / NBRC 15819 / NCTC 12168 / Alc 37) (Ochrobactrum anthropi).